We begin with the raw amino-acid sequence, 373 residues long: tRNA-specific 2-thiouridylase MnmA (373 aa).

ATP-binding positions include 12–19 and M38; that span reads GMSGGVDS. The interaction with target base in tRNA stretch occupies residues 98–100; it reads NPD. The Nucleophile role is filled by C103. An intrachain disulfide couples C103 to C200. G127 is a binding site for ATP. Residues 150–152 are interaction with tRNA; the sequence is KDQ. C200 functions as the Cysteine persulfide intermediate in the catalytic mechanism. Residues 312–313 are interaction with tRNA; it reads RY.

This sequence belongs to the MnmA/TRMU family.

The protein resides in the cytoplasm. The enzyme catalyses S-sulfanyl-L-cysteinyl-[protein] + uridine(34) in tRNA + AH2 + ATP = 2-thiouridine(34) in tRNA + L-cysteinyl-[protein] + A + AMP + diphosphate + H(+). In terms of biological role, catalyzes the 2-thiolation of uridine at the wobble position (U34) of tRNA, leading to the formation of s(2)U34. The sequence is that of tRNA-specific 2-thiouridylase MnmA from Streptococcus uberis (strain ATCC BAA-854 / 0140J).